Consider the following 465-residue polypeptide: Glutamate--tRNA ligase (465 aa).

The short motif at Pro5–Gly15 is the 'HIGH' region element. Residues Cys96, Cys98, Cys118, and Asp120 each contribute to the Zn(2+) site. The short motif at Lys228–Arg232 is the 'KMSKS' region element. Lys231 serves as a coordination point for ATP.

The protein belongs to the class-I aminoacyl-tRNA synthetase family. Glutamate--tRNA ligase type 1 subfamily. Monomer. It depends on Zn(2+) as a cofactor.

Its subcellular location is the cytoplasm. It carries out the reaction tRNA(Glu) + L-glutamate + ATP = L-glutamyl-tRNA(Glu) + AMP + diphosphate. In terms of biological role, catalyzes the attachment of glutamate to tRNA(Glu) in a two-step reaction: glutamate is first activated by ATP to form Glu-AMP and then transferred to the acceptor end of tRNA(Glu). The polypeptide is Glutamate--tRNA ligase (Salinispora tropica (strain ATCC BAA-916 / DSM 44818 / JCM 13857 / NBRC 105044 / CNB-440)).